Here is a 132-residue protein sequence, read N- to C-terminus: Small ribosomal subunit protein uS8 (132 aa).

This sequence belongs to the universal ribosomal protein uS8 family. As to quaternary structure, part of the 30S ribosomal subunit. Contacts proteins S5 and S12.

In terms of biological role, one of the primary rRNA binding proteins, it binds directly to 16S rRNA central domain where it helps coordinate assembly of the platform of the 30S subunit. This chain is Small ribosomal subunit protein uS8, found in Rhodococcus jostii (strain RHA1).